Here is a 317-residue protein sequence, read N- to C-terminus: Zinc finger protein 771 (317 aa).

A Glycyl lysine isopeptide (Lys-Gly) (interchain with G-Cter in SUMO2) cross-link involves residue Lys-33. 8 C2H2-type zinc fingers span residues 63-85 (HACPDCGRAFARRSTLAKHARTH), 91-113 (FACTECGRCFSQKSALTKHGRTH), 119-141 (YQCPECDKRFSAASNLRQHRRRH), 147-169 (YACAHCGRRFAQSSNYAQHLRVH), 175-197 (YACPDCGRAFGGSSCLARHRRTH), 203-225 (YACADCGTRFAQSSALAKHRRVH), 231-253 (HRCAVCGRRFGHRSNLAEHARTH), and 259-281 (YPCTECGRRFRLSSHFIRHRRAH).

The protein belongs to the krueppel C2H2-type zinc-finger protein family.

It localises to the nucleus. In terms of biological role, may be involved in transcriptional regulation. The protein is Zinc finger protein 771 (Znf771) of Mus musculus (Mouse).